Consider the following 211-residue polypeptide: Thymidylate kinase (211 aa).

7 to 14 (GMDGSGKT) lines the ATP pocket.

The protein belongs to the thymidylate kinase family.

It catalyses the reaction dTMP + ATP = dTDP + ADP. In terms of biological role, phosphorylation of dTMP to form dTDP in both de novo and salvage pathways of dTTP synthesis. The sequence is that of Thymidylate kinase from Mesoplasma florum (strain ATCC 33453 / NBRC 100688 / NCTC 11704 / L1) (Acholeplasma florum).